Consider the following 127-residue polypeptide: Histone H2B.2 (127 aa).

The disordered stretch occupies residues 1–35 (MAPKAEKKPASKAPAAKKTTASTDASKKRTKTRKE). Residues lysine 7 and lysine 8 each carry the N6-acetyllysine; alternate modification. Glycyl lysine isopeptide (Lys-Gly) (interchain with G-Cter in SUMO); alternate cross-links involve residues lysine 7 and lysine 8. Residue serine 11 is modified to Phosphoserine. Positions 11–24 (SKAPAAKKTTASTD) are enriched in low complexity. Lysine 12 carries the post-translational modification N6-acetyllysine. Lysine 120 participates in a covalent cross-link: Glycyl lysine isopeptide (Lys-Gly) (interchain with G-Cter in ubiquitin).

Belongs to the histone H2B family. As to quaternary structure, the nucleosome is a histone octamer containing two molecules each of H2A, H2B, H3 and H4 assembled in one H3-H4 heterotetramer and two H2A-H2B heterodimers. The octamer wraps approximately 147 bp of DNA. Post-translationally, monoubiquitinated by the UBC2-BRE1 complex to form H2BK123ub1. H2BK123ub1 gives a specific tag for epigenetic transcriptional activation and is also prerequisite for H3K4me and H3K79me formation. H2BK123ub1 also modulates the formation of double-strand breaks during meiosis and is a prerequisite for DNA-damage checkpoint activation. In terms of processing, phosphorylated by STE20 to form H2BS10ph during progression through meiotic prophase. May be correlated with chromosome condensation. Acetylation of N-terminal lysines and particularly formation of H2BK11ac has a positive effect on transcription. Post-translationally, sumoylation to form H2BK6su or H2BK7su occurs preferentially near the telomeres and represses gene transcription.

It localises to the nucleus. The protein localises to the chromosome. Its function is as follows. Core component of nucleosome. Nucleosomes wrap and compact DNA into chromatin, limiting DNA accessibility to the cellular machineries which require DNA as a template. Histones thereby play a central role in transcription regulation, DNA repair, DNA replication and chromosomal stability. DNA accessibility is regulated via a complex set of post-translational modifications of histones, also called histone code, and nucleosome remodeling. This is Histone H2B.2 (HTB2) from Eremothecium gossypii (strain ATCC 10895 / CBS 109.51 / FGSC 9923 / NRRL Y-1056) (Yeast).